The chain runs to 117 residues: Heat shock 70 kDa protein 1-like (117 aa).

ATP is bound by residues 72–75 (ERAK) and 84–87 (GSTR).

Belongs to the heat shock protein 70 family. In terms of assembly, interacts with PRKN. In terms of tissue distribution, detected at higher levels in caput epididymal spermatazoa than in cauda epididymal spermatazoa (at protein level).

Molecular chaperone implicated in a wide variety of cellular processes, including protection of the proteome from stress, folding and transport of newly synthesized polypeptides, activation of proteolysis of misfolded proteins and the formation and dissociation of protein complexes. Plays a pivotal role in the protein quality control system, ensuring the correct folding of proteins, the re-folding of misfolded proteins and controlling the targeting of proteins for subsequent degradation. This is achieved through cycles of ATP binding, ATP hydrolysis and ADP release, mediated by co-chaperones. The affinity for polypeptides is regulated by its nucleotide bound state. In the ATP-bound form, it has a low affinity for substrate proteins. However, upon hydrolysis of the ATP to ADP, it undergoes a conformational change that increases its affinity for substrate proteins. It goes through repeated cycles of ATP hydrolysis and nucleotide exchange, which permits cycles of substrate binding and release. Positive regulator of PRKN translocation to damaged mitochondria. This is Heat shock 70 kDa protein 1-like from Mesocricetus auratus (Golden hamster).